Here is a 466-residue protein sequence, read N- to C-terminus: Asparagine--tRNA ligase (466 aa).

The protein belongs to the class-II aminoacyl-tRNA synthetase family. Homodimer.

The protein localises to the cytoplasm. It carries out the reaction tRNA(Asn) + L-asparagine + ATP = L-asparaginyl-tRNA(Asn) + AMP + diphosphate + H(+). The protein is Asparagine--tRNA ligase of Photorhabdus laumondii subsp. laumondii (strain DSM 15139 / CIP 105565 / TT01) (Photorhabdus luminescens subsp. laumondii).